Consider the following 654-residue polypeptide: Protein SERAC1 (654 aa).

The helical transmembrane segment at 32-54 (NIIKFTGSLILGGSLFITYEVLA) threads the bilayer.

It belongs to the SERAC1 family.

The protein localises to the mitochondrion membrane. The protein resides in the endoplasmic reticulum. It is found in the mitochondrion. In terms of biological role, facilitates the transport of serine from the cytosol to the mitochondria by interacting with and stabilizing Sideroflexin-1 (SFXN1), a mitochondrial serine transporter, playing a fundamental role in the one-carbon cycle responsible for the synthesis of nucleotides needed for mitochondrial DNA replication. Plays an important role in the phosphatidylglycerol (PG) remodeling that is essential for both mitochondrial function and intracellular cholesterol trafficking. Specifically involved in the exchange of the sn-1 acyl chain from PG 16:0/18:1(9Z) (also known as 1-hexadecanoyl-2-(9Z-octadecenoyl)-sn-glycero-3-phospho-(1'-sn-glycerol)) to PG 18:0/18:1(9Z) (also known as 1-octadecanoyl-2-(9Z-octadecenoyl)-sn-glycero-3-phospho-(1'-sn-glycerol)), a step needed in the bis(monoacylglycerol)phosphate biosynthetic pathway. May have acyltransferase activity although the mechanism for PG remodeling has not been determined. This chain is Protein SERAC1 (SERAC1), found in Bos taurus (Bovine).